The primary structure comprises 260 residues: Putative [LysW]-aminoadipate/[LysW]-glutamate kinase (260 aa).

Substrate contacts are provided by residues 35-36 (GG), arginine 62, and asparagine 162.

The protein belongs to the acetylglutamate kinase family. LysZ subfamily.

Its subcellular location is the cytoplasm. It carries out the reaction [amino-group carrier protein]-C-terminal-N-(1,4-dicarboxybutan-1-yl)-L-glutamine + ATP = [amino-group carrier protein]-C-terminal-N-(1-carboxy-5-phosphooxy-5-oxopentan-1-yl)-L-glutamine + ADP. It catalyses the reaction [amino-group carrier protein]-C-terminal-gamma-(L-glutamyl)-L-glutamate + ATP = [amino-group carrier protein]-C-terminal-gamma-(5-phospho-L-glutamyl)-L-glutamate + ADP. The protein operates within amino-acid biosynthesis; L-lysine biosynthesis via AAA pathway; L-lysine from L-alpha-aminoadipate (Thermus route): step 2/5. It functions in the pathway amino-acid biosynthesis; L-arginine biosynthesis. Its function is as follows. Involved in both the arginine and lysine biosynthetic pathways. Phosphorylates the LysW-bound precursors glutamate (for arginine biosynthesis), respectively alpha-aminoadipate (for lysine biosynthesis). The chain is Putative [LysW]-aminoadipate/[LysW]-glutamate kinase from Pyrobaculum neutrophilum (strain DSM 2338 / JCM 9278 / NBRC 100436 / V24Sta) (Thermoproteus neutrophilus).